Consider the following 161-residue polypeptide: Endoribonuclease YbeY (161 aa).

The Zn(2+) site is built by histidine 127, histidine 131, and histidine 137.

Belongs to the endoribonuclease YbeY family. It depends on Zn(2+) as a cofactor.

It localises to the cytoplasm. In terms of biological role, single strand-specific metallo-endoribonuclease involved in late-stage 70S ribosome quality control and in maturation of the 3' terminus of the 16S rRNA. The sequence is that of Endoribonuclease YbeY from Listeria welshimeri serovar 6b (strain ATCC 35897 / DSM 20650 / CCUG 15529 / CIP 8149 / NCTC 11857 / SLCC 5334 / V8).